A 356-amino-acid polypeptide reads, in one-letter code: Tyrosine recombinase XerS (356 aa).

One can recognise a Core-binding (CB) domain in the interval 16–121 (IMPWYVLDYY…ALSSLYKYLT (106 aa)). One can recognise a Tyr recombinase domain in the interval 169-354 (AFLDYVDKEY…VNDEQKTALD (186 aa)). Active-site residues include arginine 210, lysine 234, histidine 306, arginine 309, and histidine 332. Residue tyrosine 341 is the O-(3'-phospho-DNA)-tyrosine intermediate of the active site.

Belongs to the 'phage' integrase family. XerS subfamily.

It is found in the cytoplasm. With respect to regulation, ftsK is required for recombination. Functionally, site-specific tyrosine recombinase, which acts by catalyzing the cutting and rejoining of the recombining DNA molecules. Essential to convert dimers of the bacterial chromosome into monomers to permit their segregation at cell division. The chain is Tyrosine recombinase XerS from Streptococcus pyogenes serotype M12 (strain MGAS9429).